A 1382-amino-acid chain; its full sequence is Eukaryotic translation initiation factor 3 subunit A (1382 aa).

N6-acetyllysine is present on K68. Positions 82–120 (NIKSLEDVVRAYLKMAEEKTEAAKEESQQMVLDIEDLDN) form a coiled coil. The PCI domain maps to 315–498 (MQRMSTRVLL…RTLSFGSDLN (184 aa)). A phosphoserine mark is found at S492 and S584. Positions 664–835 (LDPDFIMAKQ…REERERAERA (172 aa)) are interaction with EIF3B. Disordered stretches follow at residues 810-844 (KEEE…LREY) and 866-1382 (EERE…TVRR). 3 stretches are compositionally biased toward basic and acidic residues: residues 866–1165 (EERE…DDSR), 1177–1328 (GWRE…DPPR), and 1336–1371 (SRDR…TKNE). A phosphoserine mark is found at S881, S882, and S895. Repeat 1 spans residues 925-934 (DEDRSHRRDE). A 25 X 10 AA approximate tandem repeats of [DE]-[DE]-[DE]-R-[SEVGFPILV]-[HPSN]-[RSW]-[RL]-[DRGTIHN]-[EPMANLGDT] region spans residues 925 to 1172 (DEDRSHRRDE…DSRPGPWRPL (248 aa)). The 2; truncated repeat unit spans residues 935-942 (ERPRRLGD). Tandem repeats lie at residues 943 to 952 (DEDREPSLRP), 953 to 962 (DDDRVPRRGM), 963 to 972 (DDDRGPRRGP), 973 to 982 (EEDRFSRRGA), 983 to 992 (DDDRPSWRNT), 993 to 1002 (DDDRPPRRIA), 1003 to 1012 (DEDRGNWRHA), 1013 to 1022 (DDDRPPRRGL), 1023 to 1032 (DEDRGSWRTA), 1033 to 1042 (DEDRGPRRGM), 1043 to 1052 (DDDRGPRRGG), 1054 to 1063 (DDERSSWRNA), 1064 to 1073 (DDDRGPRRGL), 1074 to 1083 (DDDRGPRRGM), 1084 to 1093 (DDDRGPRRGM), 1094 to 1103 (DDDRGPRRGM), 1104 to 1113 (DDDRGPRRGL), 1114 to 1123 (DDDRGPWRNA), 1124 to 1133 (DDDRIPRRGA), and 1134 to 1143 (EDDRGPWRNM). S949 is subject to Phosphoserine. A Phosphoserine modification is found at S1028. The stretch at 1144 to 1152 (DDDRLSRRA) is one 23; truncated repeat. Repeat unit 24 spans residues 1153–1162 (DDDRFPRRGD). A 25; approximate repeat occupies 1163 to 1172 (DSRPGPWRPL). 5 positions are modified to phosphoserine: S1188, S1198, S1262, S1336, and S1364.

As to quaternary structure, interacts with EIF4G1. Component of the eukaryotic translation initiation factor 3 (eIF-3) complex, which is composed of 13 subunits: EIF3A, EIF3B, EIF3C, EIF3D, EIF3E, EIF3F, EIF3G, EIF3H, EIF3I, EIF3J, EIF3K, EIF3L and EIF3M. The eIF-3 complex appears to include 3 stable modules: module A is composed of EIF3A, EIF3B, EIF3G and EIF3I; module B is composed of EIF3F, EIF3H, and EIF3M; and module C is composed of EIF3C, EIF3D, EIF3E, EIF3L and EIF3K. EIF3C of module C binds EIF3B of module A and EIF3H of module B, thereby linking the three modules. EIF3J is a labile subunit that binds to the eIF-3 complex via EIF3B. The eIF-3 complex interacts with RPS6KB1 under conditions of nutrient depletion. Mitogenic stimulation leads to binding and activation of a complex composed of MTOR and RPTOR, leading to phosphorylation and release of RPS6KB1 and binding of EIF4B to eIF-3. Also interacts with KRT7 and PIWIL2. Phosphorylated. Phosphorylation is enhanced upon serum stimulation.

The protein localises to the cytoplasm. Its function is as follows. RNA-binding component of the eukaryotic translation initiation factor 3 (eIF-3) complex, which is required for several steps in the initiation of protein synthesis. The eIF-3 complex associates with the 40S ribosome and facilitates the recruitment of eIF-1, eIF-1A, eIF-2:GTP:methionyl-tRNAi and eIF-5 to form the 43S pre-initiation complex (43S PIC). The eIF-3 complex stimulates mRNA recruitment to the 43S PIC and scanning of the mRNA for AUG recognition. The eIF-3 complex is also required for disassembly and recycling of post-termination ribosomal complexes and subsequently prevents premature joining of the 40S and 60S ribosomal subunits prior to initiation. The eIF-3 complex specifically targets and initiates translation of a subset of mRNAs involved in cell proliferation, including cell cycling, differentiation and apoptosis, and uses different modes of RNA stem-loop binding to exert either translational activation or repression. Functionally, (Microbial infection) Essential for the initiation of translation on type-1 viral ribosomal entry sites (IRESs), like for HCV, PV, EV71 or BEV translation. (Microbial infection) In case of FCV infection, plays a role in the ribosomal termination-reinitiation event leading to the translation of VP2. The sequence is that of Eukaryotic translation initiation factor 3 subunit A from Homo sapiens (Human).